A 310-amino-acid polypeptide reads, in one-letter code: Membrane protein insertase YidC 2 (310 aa).

The N-terminal stretch at 1-23 (MKKTLKRILFSSLSLSMLLLLTG) is a signal peptide. Residue cysteine 24 is the site of N-palmitoyl cysteine attachment. Residue cysteine 24 is the site of S-diacylglycerol cysteine attachment. The next 5 helical transmembrane spans lie at 33-53 (PYGV…TYFA), 58-78 (LGFG…ILPL), 135-155 (FGGI…AIFF), 180-200 (LTVI…QGVP), and 219-239 (VFMS…GGIF). Residues 266–310 (NPPKAYKANNARKDVTNSTKATESNQAIITSKKTNRNAGKQKRRG) are disordered. The span at 281-297 (TNSTKATESNQAIITSK) shows a compositional bias: polar residues. The segment covering 298–310 (KTNRNAGKQKRRG) has biased composition (basic residues).

The protein belongs to the OXA1/ALB3/YidC family. Type 2 subfamily.

The protein localises to the cell membrane. In terms of biological role, required for the insertion and/or proper folding and/or complex formation of integral membrane proteins into the membrane. Involved in integration of membrane proteins that insert both dependently and independently of the Sec translocase complex, as well as at least some lipoproteins. The chain is Membrane protein insertase YidC 2 from Streptococcus agalactiae serotype V (strain ATCC BAA-611 / 2603 V/R).